Reading from the N-terminus, the 346-residue chain is Phosphoribosylformylglycinamidine cyclo-ligase (346 aa).

This sequence belongs to the AIR synthase family.

The protein localises to the cytoplasm. The catalysed reaction is 2-formamido-N(1)-(5-O-phospho-beta-D-ribosyl)acetamidine + ATP = 5-amino-1-(5-phospho-beta-D-ribosyl)imidazole + ADP + phosphate + H(+). It functions in the pathway purine metabolism; IMP biosynthesis via de novo pathway; 5-amino-1-(5-phospho-D-ribosyl)imidazole from N(2)-formyl-N(1)-(5-phospho-D-ribosyl)glycinamide: step 2/2. This is Phosphoribosylformylglycinamidine cyclo-ligase from Proteus mirabilis (strain HI4320).